Reading from the N-terminus, the 189-residue chain is ATP synthase subunit b (189 aa).

A helical membrane pass occupies residues 25 to 45 (LPVWPEVVIGLICFGIVFFVF).

Belongs to the ATPase B chain family. In terms of assembly, F-type ATPases have 2 components, F(1) - the catalytic core - and F(0) - the membrane proton channel. F(1) has five subunits: alpha(3), beta(3), gamma(1), delta(1), epsilon(1). F(0) has three main subunits: a(1), b(2) and c(10-14). The alpha and beta chains form an alternating ring which encloses part of the gamma chain. F(1) is attached to F(0) by a central stalk formed by the gamma and epsilon chains, while a peripheral stalk is formed by the delta and b chains.

It is found in the cell membrane. In terms of biological role, f(1)F(0) ATP synthase produces ATP from ADP in the presence of a proton or sodium gradient. F-type ATPases consist of two structural domains, F(1) containing the extramembraneous catalytic core and F(0) containing the membrane proton channel, linked together by a central stalk and a peripheral stalk. During catalysis, ATP synthesis in the catalytic domain of F(1) is coupled via a rotary mechanism of the central stalk subunits to proton translocation. Its function is as follows. Component of the F(0) channel, it forms part of the peripheral stalk, linking F(1) to F(0). The polypeptide is ATP synthase subunit b (Streptomyces griseus subsp. griseus (strain JCM 4626 / CBS 651.72 / NBRC 13350 / KCC S-0626 / ISP 5235)).